A 119-amino-acid polypeptide reads, in one-letter code: Ribonuclease P protein component (119 aa).

The protein belongs to the RnpA family. In terms of assembly, consists of a catalytic RNA component (M1 or rnpB) and a protein subunit.

The catalysed reaction is Endonucleolytic cleavage of RNA, removing 5'-extranucleotides from tRNA precursor.. In terms of biological role, RNaseP catalyzes the removal of the 5'-leader sequence from pre-tRNA to produce the mature 5'-terminus. It can also cleave other RNA substrates such as 4.5S RNA. The protein component plays an auxiliary but essential role in vivo by binding to the 5'-leader sequence and broadening the substrate specificity of the ribozyme. This is Ribonuclease P protein component from Pectobacterium atrosepticum (strain SCRI 1043 / ATCC BAA-672) (Erwinia carotovora subsp. atroseptica).